Here is a 424-residue protein sequence, read N- to C-terminus: Deoxyguanosinetriphosphate triphosphohydrolase-like protein (424 aa).

Residues 1-24 (MYPYSDADAFRRHPERAKSSQLRT) form a disordered region. Residues 8–18 (DAFRRHPERAK) show a composition bias toward basic and acidic residues. The region spanning 67–217 (RLTHSLEVAQ…MDFSDDIAYS (151 aa)) is the HD domain.

The protein belongs to the dGTPase family. Type 2 subfamily.

The protein is Deoxyguanosinetriphosphate triphosphohydrolase-like protein of Corynebacterium glutamicum (strain R).